The following is a 789-amino-acid chain: Disintegrin and metalloproteinase domain-containing protein 7 (789 aa).

The N-terminal stretch at 1-23 (MLTTGIFWMTVLISHIQERGIVG) is a signal peptide. Residues 24 to 176 (VEGQELVHPK…NHSCVGLNFT (153 aa)) constitute a propeptide that is removed on maturation. Residues 24–667 (VEGQELVHPK…EWGEALNLTS (644 aa)) lie on the Extracellular side of the membrane. 3 N-linked (GlcNAc...) asparagine glycosylation sites follow: N84, N167, and N174. Residues 199 to 393 (KFIELFVVAD…QKPACILNNP (195 aa)) enclose the Peptidase M12B domain. Intrachain disulfides connect C310/C388, C350/C372, C352/C357, and C459/C479. Residues 401-487 (YPFCGNKKVD…ECPKDEFQAN (87 aa)) enclose the Disintegrin domain. 3 N-linked (GlcNAc...) asparagine glycosylation sites follow: N583, N628, and N664. Residues 668 to 689 (VSIMVIVLVMVIIGVGLVILLI) form a helical membrane-spanning segment. The Cytoplasmic segment spans residues 690 to 789 (RYQKCIKMKQ…DTQSGCERLG (100 aa)). The disordered stretch occupies residues 764-789 (RGIADPKQTDNVNLNLDTQSGCERLG). Polar residues predominate over residues 772-789 (TDNVNLNLDTQSGCERLG).

In terms of assembly, interacts with ITM2B in sperm; the interaction increases following capacitation. Interacts with HSPA5 and CANX. As to expression, expressed in both the head and tails of sperm (at protein level). Expressed in the epididymis (at protein level). Abundantly expressed in the apical region of the proximal caput epididymal epithelium, with decreasing expression in the mid and distal caput epididymal epithelium.

It localises to the membrane. Functionally, required for normal male fertility via maintenance of epithelial cell morphology in the caput epididymis and subsequently correct epididymis lumen structure required for sperm development. Plays a role in sperm motility, flagella morphology and tyrosine phosphorylation during sperm capacitance. Plays a role in normal expression levels of HSPA5, ITM2B and ADAM2 in sperm both prior to and post-capacitation. This is a non catalytic metalloprotease-like protein. The protein is Disintegrin and metalloproteinase domain-containing protein 7 of Mus musculus (Mouse).